A 402-amino-acid polypeptide reads, in one-letter code: 8-amino-7-oxononanoate synthase (402 aa).

Position 26 (Arg-26) interacts with substrate. 114–115 (GY) contributes to the pyridoxal 5'-phosphate binding site. His-139 is a substrate binding site. Positions 182, 210, and 239 each coordinate pyridoxal 5'-phosphate. Position 242 is an N6-(pyridoxal phosphate)lysine (Lys-242). Thr-359 is a binding site for substrate.

Belongs to the class-II pyridoxal-phosphate-dependent aminotransferase family. BioF subfamily. As to quaternary structure, homodimer. Pyridoxal 5'-phosphate serves as cofactor.

The catalysed reaction is 6-carboxyhexanoyl-[ACP] + L-alanine + H(+) = (8S)-8-amino-7-oxononanoate + holo-[ACP] + CO2. It participates in cofactor biosynthesis; biotin biosynthesis. Functionally, catalyzes the decarboxylative condensation of pimeloyl-[acyl-carrier protein] and L-alanine to produce 8-amino-7-oxononanoate (AON), [acyl-carrier protein], and carbon dioxide. The sequence is that of 8-amino-7-oxononanoate synthase from Halorhodospira halophila (strain DSM 244 / SL1) (Ectothiorhodospira halophila (strain DSM 244 / SL1)).